Consider the following 216-residue polypeptide: MTDPTSIKHQTTLTSGTSADFTQASEPFALFAEWFSEANKSELNDPNAMALATVDDSGLPDVRMVLMKGYDEDGFVFYSHKASQKGQELAGNPKAALLFHWKSLRRQVRIRGLVTPVTDEEADAYFATRPKQAQLGAWASKQSQPLESRFAFEQAIAKVAAQYIIGEVPRPPGWSGWRITPVRMEFWHDRPFRLHDRIEFRRDAAGQPWTKVRMYP.

Residues 63–68, 78–79, Lys-85, and Gln-107 each bind FMN; these read RMVLMK and YS. Lys-68 contributes to the substrate binding site. Substrate is bound by residues Tyr-125 and Arg-129. FMN-binding positions include 142–143 and Trp-187; that span reads QS. 193 to 195 is a binding site for substrate; the sequence is RLH. Arg-197 is a binding site for FMN.

The protein belongs to the pyridoxamine 5'-phosphate oxidase family. In terms of assembly, homodimer. FMN serves as cofactor.

It carries out the reaction pyridoxamine 5'-phosphate + O2 + H2O = pyridoxal 5'-phosphate + H2O2 + NH4(+). It catalyses the reaction pyridoxine 5'-phosphate + O2 = pyridoxal 5'-phosphate + H2O2. It functions in the pathway cofactor metabolism; pyridoxal 5'-phosphate salvage; pyridoxal 5'-phosphate from pyridoxamine 5'-phosphate: step 1/1. It participates in cofactor metabolism; pyridoxal 5'-phosphate salvage; pyridoxal 5'-phosphate from pyridoxine 5'-phosphate: step 1/1. In terms of biological role, catalyzes the oxidation of either pyridoxine 5'-phosphate (PNP) or pyridoxamine 5'-phosphate (PMP) into pyridoxal 5'-phosphate (PLP). This chain is Pyridoxine/pyridoxamine 5'-phosphate oxidase, found in Bradyrhizobium sp. (strain BTAi1 / ATCC BAA-1182).